The chain runs to 259 residues: Triosephosphate isomerase (259 aa).

10 to 12 (NWK) contacts substrate. H102 functions as the Electrophile in the catalytic mechanism. E172 functions as the Proton acceptor in the catalytic mechanism. Residues G178, S218, and 239–240 (GG) contribute to the substrate site.

It belongs to the triosephosphate isomerase family. As to quaternary structure, homodimer.

Its subcellular location is the cytoplasm. The catalysed reaction is D-glyceraldehyde 3-phosphate = dihydroxyacetone phosphate. The protein operates within carbohydrate biosynthesis; gluconeogenesis. It participates in carbohydrate degradation; glycolysis; D-glyceraldehyde 3-phosphate from glycerone phosphate: step 1/1. Its function is as follows. Involved in the gluconeogenesis. Catalyzes stereospecifically the conversion of dihydroxyacetone phosphate (DHAP) to D-glyceraldehyde-3-phosphate (G3P). The protein is Triosephosphate isomerase of Leifsonia xyli subsp. xyli (strain CTCB07).